The sequence spans 447 residues: Omega-3 fatty acid desaturase, chloroplastic (447 aa).

The Histidine box-1 signature appears at 167–171; the sequence is HDCGH. The Histidine box-2 signature appears at 203-207; that stretch reads HRTHH. The Histidine box-3 motif lies at 370–374; it reads HVIHH.

Belongs to the fatty acid desaturase type 1 family.

The protein localises to the plastid. It is found in the chloroplast membrane. The protein operates within lipid metabolism; polyunsaturated fatty acid biosynthesis. Its function is as follows. Chloroplast omega-3 fatty acid desaturase introduces the third double bond in the biosynthesis of 16:3 and 18:3 fatty acids, important constituents of plant membranes. It is thought to use ferredoxin as an electron donor and to act on fatty acids esterified to galactolipids, sulfolipids and phosphatidylglycerol. In Sesamum indicum (Oriental sesame), this protein is Omega-3 fatty acid desaturase, chloroplastic (FAD7).